Consider the following 583-residue polypeptide: Membrane-bound O-acyltransferase gup1 (583 aa).

The Extracellular segment spans residues 1 to 52 (MLRLFRFDVLETSTKDTERPNSKSSRLSSTSGSSHPSSSSRLTVRSAVPEKS). The interval 15–42 (KDTERPNSKSSRLSSTSGSSHPSSSSRL) is disordered. The span at 22-40 (SKSSRLSSTSGSSHPSSSS) shows a compositional bias: low complexity. A helical transmembrane segment spans residues 53 to 73 (AFGSIEFIFYFSVILSILTIA). At 74-119 (CFKIHYVSSPKHPNYKNIEKYLKPGWLFGQKVDSADFQYSAFRENM) the chain is on the cytoplasmic side. A helical transmembrane segment spans residues 120–140 (PILLLVIIVYNFLWRLVKLVF). The Extracellular portion of the chain corresponds to 141–159 (TKNTNDELAIKNNYRLCFS). The chain crosses the membrane as a helical span at residues 160-180 (LLFALLVYGTGVIYVLTIALI). The Cytoplasmic portion of the chain corresponds to 181–191 (NYLISKSLKNS). Residues 192–212 (IFNPLLTWTLDISVVFFKEYF) form a helical membrane-spanning segment. The Extracellular portion of the chain corresponds to 213 to 298 (AYCKFSSLHP…SCLDEDYNLK (86 aa)). A helical membrane pass occupies residues 299–319 (NFLTYIFYAPLYLAGPIISFN). Residues 320 to 343 (NFMSQMKYPTVSTLKYRNLLYAIR) lie on the Cytoplasmic side of the membrane. The chain crosses the membrane as a helical span at residues 344–364 (FLVCVLTMEFLLHYAYVTAIS). Over 365 to 373 (KDGNWNQYS) the chain is Extracellular. Residues 374–394 (AVESAMISFIVLFMTWLKLLI) traverse the membrane as a helical segment. The Cytoplasmic segment spans residues 395–444 (PWRLFRLWSLIDDIEPPENIVRCMCNNYSAVGFWRAWHRSFNRWLIRYIY). Helical transmembrane passes span 445-465 (VPLG…TFVA) and 466-486 (LWHD…LFIL). The active site involves His468. Residues 487–512 (PERLCCFMSRRTGLTKHPYYRYISGF) lie on the Cytoplasmic side of the membrane. Residues 513-533 (GAALNIYFMIICNLIGFAVGI) traverse the membrane as a helical segment. The Extracellular portion of the chain corresponds to 534-549 (DGIKNVLVSFFLTLKG). The helical transmembrane segment at 550–570 (AMSAIAAFIMFFSAVQIMFQI) threads the bilayer. Over 571–583 (RVNEEEEGINLRC) the chain is Cytoplasmic.

The protein belongs to the membrane-bound acyltransferase family.

The protein resides in the cell membrane. It localises to the endoplasmic reticulum membrane. Its subcellular location is the mitochondrion membrane. Its function is as follows. Membrane-bound O-acyltransferase involved in the remodeling of glycosylphosphatidylinositol (GPI) anchors. Acts only on GPI-anchored proteins, but not on free GPI lipids. Also involved in lipid metabolism, having profound effects on sphingolipid-sterol-ordered domains integrity and assembly. Involved in cell integrity and apoptosis. In Schizosaccharomyces pombe (strain 972 / ATCC 24843) (Fission yeast), this protein is Membrane-bound O-acyltransferase gup1 (gup1).